A 126-amino-acid chain; its full sequence is Aspartate 1-decarboxylase (126 aa).

Catalysis depends on S25, which acts as the Schiff-base intermediate with substrate; via pyruvic acid. S25 is modified (pyruvic acid (Ser)). T57 is a binding site for substrate. Y58 (proton donor) is an active-site residue. Residue G73 to A75 coordinates substrate.

The protein belongs to the PanD family. Heterooctamer of four alpha and four beta subunits. It depends on pyruvate as a cofactor. Post-translationally, is synthesized initially as an inactive proenzyme, which is activated by self-cleavage at a specific serine bond to produce a beta-subunit with a hydroxyl group at its C-terminus and an alpha-subunit with a pyruvoyl group at its N-terminus.

It is found in the cytoplasm. It catalyses the reaction L-aspartate + H(+) = beta-alanine + CO2. It participates in cofactor biosynthesis; (R)-pantothenate biosynthesis; beta-alanine from L-aspartate: step 1/1. Its function is as follows. Catalyzes the pyruvoyl-dependent decarboxylation of aspartate to produce beta-alanine. This Stenotrophomonas maltophilia (strain R551-3) protein is Aspartate 1-decarboxylase.